The following is a 286-amino-acid chain: MGQKIHPTGFRLSVLKNWSSKWYANGKSFPGMLNEDIKVREYLKKKLAHASVGRVVIERPSKNARITIYSSRPGVVIGKKGEDIEVLRGALQKLMGVPVHVNIEEIRKPEIDAQLIADNIAQQLEKRIMFRRAMKRAMQNAMRLGAQGIKIMSSGRLNGIEIARTEWYREGRVPLHTLRADLDYGVSEAKTTYGVIGIKVWVFKGEVIGRGEQAGAGTAAPQVLPPAGEPETRRPPRRPAGRADARSDGKAGEKKGPRKSDNSSEESATKPAKKPVKPGVNDAAAS.

The 69-residue stretch at 39–107 folds into the KH type-2 domain; the sequence is VREYLKKKLA…PVHVNIEEIR (69 aa). The segment at 213–286 is disordered; it reads QAGAGTAAPQ…KPGVNDAAAS (74 aa). Residues 241–262 are compositionally biased toward basic and acidic residues; that stretch reads GRADARSDGKAGEKKGPRKSDN.

This sequence belongs to the universal ribosomal protein uS3 family. Part of the 30S ribosomal subunit. Forms a tight complex with proteins S10 and S14.

In terms of biological role, binds the lower part of the 30S subunit head. Binds mRNA in the 70S ribosome, positioning it for translation. The sequence is that of Small ribosomal subunit protein uS3 from Nitrosospira multiformis (strain ATCC 25196 / NCIMB 11849 / C 71).